We begin with the raw amino-acid sequence, 409 residues long: Elongation factor Tu (409 aa).

Residues 10–214 (KPHVNVGTIG…AVDNYIPTPE (205 aa)) form the tr-type G domain. Residues 19-26 (GHVDHGKT) form a G1 region. Residue 19 to 26 (GHVDHGKT) coordinates GTP. Residue Thr26 participates in Mg(2+) binding. The segment at 60-64 (GITIN) is G2. The tract at residues 81 to 84 (DCPG) is G3. GTP-binding positions include 81–85 (DCPGH) and 136–139 (NKVD). The tract at residues 136–139 (NKVD) is G4. A G5 region spans residues 174 to 176 (SGL).

It belongs to the TRAFAC class translation factor GTPase superfamily. Classic translation factor GTPase family. EF-Tu/EF-1A subfamily. Monomer.

The protein resides in the cytoplasm. It catalyses the reaction GTP + H2O = GDP + phosphate + H(+). Functionally, GTP hydrolase that promotes the GTP-dependent binding of aminoacyl-tRNA to the A-site of ribosomes during protein biosynthesis. The protein is Elongation factor Tu of Thermosynechococcus vestitus (strain NIES-2133 / IAM M-273 / BP-1).